Here is a 158-residue protein sequence, read N- to C-terminus: C-type natriuretic peptide 3 (158 aa).

The N-terminal stretch at 1 to 21 (MSLNLPGYALFFILLVASSGA) is a signal peptide. A propeptide spanning residues 22-136 (KPAPDLQILE…SKRSRSRYKK (115 aa)) is cleaved from the precursor. The interval 32–95 (PPLSSLEEQE…EVQERGRGTG (64 aa)) is disordered. Residues 47–64 (VQEKVQEQQEEVQEKVQE) are compositionally biased toward basic and acidic residues. The segment covering 65-86 (QQEEVQEQQEEVQEQQEEQQEE) has biased composition (acidic residues). Cys142 and Cys158 form a disulfide bridge.

This sequence belongs to the natriuretic peptide family.

The protein resides in the secreted. Its function is as follows. Exhibits natriuretic and vasodepressant activity. Has cGMP-stimulating activity. May help to regulate body fluid homeostasis in a variety of aquatic environments. The polypeptide is C-type natriuretic peptide 3 (Takifugu rubripes (Japanese pufferfish)).